A 504-amino-acid polypeptide reads, in one-letter code: CDK5 regulatory subunit-associated protein 3 (504 aa).

Short sequence motifs (shuffled ATG8-binding motif) lie at residues 266–269 (IDWG), 290–293 (IDWG), and 308–311 (IDWG). Positions 268 to 504 (WGDFGLEAVS…RPVNLMGTSV (237 aa)) are required for interaction with UFL1 and mediates interaction with CHEK1. Positions 353-368 (DELMELEIFLSQRAVE) are RPL10a-binding domain (RBD). A Glycyl lysine isopeptide (Lys-Gly) (interchain with G-Cter in SUMO2) cross-link involves residue lysine 448.

This sequence belongs to the CDK5RAP3 family. In terms of assembly, substrate adapter component of the UFM1 ribosome E3 ligase (UREL) complex, composed of UFL1, DDRGK1 and CDK5RAP3. Interaction with UFL1 anchors CDK5RAP3 in the cytoplasm, preventing its translocation to the nucleus which allows expression of the CCND1 cyclin and progression of cells through the G1/S transition. Interacts with ATG8 family proteins MAP1LC3A, MAP1LC3B, GABARAP, GABARAPL1 and GABARAPL2. Interacts with CDK5R1; competes with CDK5RAP1 and CDK5RAP2. Interacts with RELA. Interacts with CHEK1; may negatively regulate CHEK1 and thereby stimulate entry into mitosis. Interacts with CDKN2A/ARF and MDM2; forms a ternary complex involved in regulation of p53/TP53. Interacts with MAPK14. Interacts with CCNB1. Interacts with TUBG1; may regulate CDK5RAP3 in mitotic G2/M transition checkpoint. Post-translationally, may be phosphorylated by CDK5. In terms of processing, ubiquitinated. Probably triggers proteasomal degradation and is negatively regulated by UFL1. May be ufmylated. Post-translationally, cleaved by caspases early during apoptosis, the resulting peptides may play a role in rupture of the nuclear envelope. Expressed in vascular endothelium. Up-regulated in failing heart. Highly expressed in the ventricular section in subacute and chronic ischemic heart failure.

It is found in the endoplasmic reticulum membrane. It localises to the cytoplasm. The protein localises to the nucleus. Its subcellular location is the cytoskeleton. The protein resides in the microtubule organizing center. It is found in the centrosome. In terms of biological role, substrate adapter of E3 ligase complexes mediating ufmylation, the covalent attachment of the ubiquitin-like modifier UFM1 to substrate proteins, and which is involved in various processes, such as ribosome recycling and reticulophagy (also called ER-phagy). As part of the UREL complex, plays a key role in ribosome recycling by promoting mono-ufmylation of RPL26/uL24 subunit of the 60S ribosome. Ufmylation of RPL26/uL24 occurs on free 60S ribosomes following ribosome dissociation: it weakens the junction between post-termination 60S subunits and SEC61 translocons, promoting release and recycling of the large ribosomal subunit from the endoplasmic reticulum membrane. Ufmylation of RPL26/uL24 and subsequent 60S ribosome recycling either take place after normal termination of translation or after ribosome stalling during cotranslational translocation at the endoplasmic reticulum. Within the UREL complex, CDK5RAP3 acts as a substrate adapter that constrains UFL1 ligase activity to mono-ufmylate RPL26/uL24 at 'Lys-134'. The UREL complex is also involved in reticulophagy in response to endoplasmic reticulum stress by promoting ufmylation of proteins such as CYB5R3, thereby promoting lysosomal degradation of ufmylated proteins. Also acts as a regulator of transcription: negatively regulates NF-kappa-B-mediated gene transcription through the control of RELA phosphorylation. Also regulates mitotic G2/M transition checkpoint and mitotic G2 DNA damage checkpoint. Through its interaction with CDKN2A/ARF and MDM2 may induce MDM2-dependent p53/TP53 ubiquitination, stabilization and activation in the nucleus, thereby promoting G1 cell cycle arrest and inhibition of cell proliferation. May also play a role in the rupture of the nuclear envelope during apoptosis. May regulate MAPK14 activity by regulating its dephosphorylation by PPM1D/WIP1. Required for liver development. The protein is CDK5 regulatory subunit-associated protein 3 of Rattus norvegicus (Rat).